The following is a 1072-amino-acid chain: Rho family-interacting cell polarization regulator 2 (1072 aa).

The stretch at 83–112 (NGLDEYLEVHQTELDKLTAQLKDMRRNSRL) forms a coiled coil. Positions 173–470 (RESLTEINRS…ATTATQHRAR (298 aa)) are necessary for interaction with NCAM and myoblast protrusion formation. Disordered stretches follow at residues 439–465 (DRVPPANSAEPSSAHVTSSPDIATTAT) and 683–718 (EVEKNSYRTEHPEARGHLQRSLTEDTGVGTSVAGSP). Over residues 447–460 (AEPSSAHVTSSPDI) the composition is skewed to polar residues. Residues 683 to 698 (EVEKNSYRTEHPEARG) show a composition bias toward basic and acidic residues.

It belongs to the RIPOR family. As to quaternary structure, homooligomer; homooligomerization is regulated by RHOC and leads to the formation of concatemers through the association of N- and C-termini. Interacts with NCAM; this interaction is necessary for myoblast protrusion formation. As to expression, expressed in myoblast and myotubes (at protein level). Expressed in brain, eyes and skeletal muscle.

The protein resides in the cytoplasm. It localises to the cytoskeleton. Its subcellular location is the cell projection. It is found in the filopodium. The protein localises to the apical cell membrane. The protein resides in the stereocilium. It localises to the stereocilium membrane. In terms of biological role, acts as an inhibitor of the small GTPase RHOA and plays several roles in the regulation of myoblast and hair cell differentiation, lymphocyte T proliferation and neutrophil polarization. Plays a role in fetal mononuclear myoblast differentiation by promoting filopodia and myotube formation. Maintains naive T lymphocytes in a quiescent state and prevents chemokine-induced T lymphocyte responses, such as cell adhesion, polarization and migration. Involved also in the regulation of neutrophil polarization, chemotaxis and adhesion. Required for normal development of inner and outer hair cell stereocilia within the cochlea of the inner ear. Plays a role for maintaining the structural organization of the basal domain of stereocilia. Involved in mechanosensory hair cell function. Required for normal hearing. The chain is Rho family-interacting cell polarization regulator 2 from Coturnix japonica (Japanese quail).